A 252-amino-acid chain; its full sequence is 5-oxoprolinase subunit A (252 aa).

The protein belongs to the LamB/PxpA family. Forms a complex composed of PxpA, PxpB and PxpC.

The enzyme catalyses 5-oxo-L-proline + ATP + 2 H2O = L-glutamate + ADP + phosphate + H(+). Its function is as follows. Catalyzes the cleavage of 5-oxoproline to form L-glutamate coupled to the hydrolysis of ATP to ADP and inorganic phosphate. The polypeptide is 5-oxoprolinase subunit A (Staphylococcus saprophyticus subsp. saprophyticus (strain ATCC 15305 / DSM 20229 / NCIMB 8711 / NCTC 7292 / S-41)).